A 104-amino-acid chain; its full sequence is Small ribosomal subunit protein uS10 (104 aa).

Belongs to the universal ribosomal protein uS10 family. Part of the 30S ribosomal subunit.

Its function is as follows. Involved in the binding of tRNA to the ribosomes. The polypeptide is Small ribosomal subunit protein uS10 (Helicobacter pylori (strain J99 / ATCC 700824) (Campylobacter pylori J99)).